Here is a 200-residue protein sequence, read N- to C-terminus: ASI1-immunoprecipitated protein 1 (200 aa).

One can recognise an RRM domain in the interval 18-101 (RTVYVDELTP…RPVRACAAEP (84 aa)).

In terms of assembly, component of the ASI1-AIPP1-EDM2 (AAE) RNA regulatory complex composed of at least AIPP1/EDM3, ASI1 and EDM2 and may contain CPL2, AIPP2 and AIPP3/BDT1. Binds directly to ASI1 and EDM2 and may function as a bridge protein between them. Co-associates with EDM2 to histone H3 lysine 9 dimethylation (H3K9me2)-marked chromatin and transcripts at a critical proximal polyadenylation site of RPP7 to hamper proximal transcript polyadeylation/termination.

The protein localises to the nucleus. Its function is as follows. Prevents gene silencing by suppressing CHG methylation as well as histone H3 lysine 9 dimethylation (H3K9me2) status at target loci. Collaboratively with ASI1 and EDM2, the AAE complex regulates alternative RNA processing (e.g. alternative splicing) and epigenetic silencing (e.g. H3K9me2) of intronic heterochromatin-containing genes as well as genic heterochromatin-containing genes by promoting distal 3' polyadenylation, thus being required for the accumulation of their full-length transcripts. May also modulate transposable elements (TE) expression. Mediates RPP7-dependent race-specific disease resistance by promoting histone H3 lysine 9 dimethylation (H3K9me2) at the proximal RPP7 polyadenylation site, thus controlling alternative polyadenylation of RPP7 immune receptor transcripts and facilitating 2-phosphoserine RNAPII occupancy. In cv. Columbia, required for RPP7-dependent disease resistance against the Hyaloperonospora arabidopsidis isolate Hiks1. This Arabidopsis thaliana (Mouse-ear cress) protein is ASI1-immunoprecipitated protein 1.